Reading from the N-terminus, the 90-residue chain is DNA-directed RNA polymerase subunit omega (90 aa).

It belongs to the RNA polymerase subunit omega family. The RNAP catalytic core consists of 2 alpha, 1 beta, 1 beta' and 1 omega subunit. When a sigma factor is associated with the core the holoenzyme is formed, which can initiate transcription.

It catalyses the reaction RNA(n) + a ribonucleoside 5'-triphosphate = RNA(n+1) + diphosphate. In terms of biological role, promotes RNA polymerase assembly. Latches the N- and C-terminal regions of the beta' subunit thereby facilitating its interaction with the beta and alpha subunits. This chain is DNA-directed RNA polymerase subunit omega, found in Hamiltonella defensa subsp. Acyrthosiphon pisum (strain 5AT).